We begin with the raw amino-acid sequence, 171 residues long: MWTLKSSLVLLLCLTCSYAFMFSSLRQKTSEPQGKVQYGEHFRIRQNLPEHTQGWLGSKWLWLLFVVVPFVILQCQRDSEKNKEQSPPGLRGGQLHSPLKKKRNASPNKDCAFNTLMELEVELMKFVSKVRNLKRAMATGSGSNLRLRKSEMPADPYHVTICEIWGEESSS.

The first 19 residues, 1-19, serve as a signal peptide directing secretion; the sequence is MWTLKSSLVLLLCLTCSYA. Residues 20–52 are Extracellular-facing; that stretch reads FMFSSLRQKTSEPQGKVQYGEHFRIRQNLPEHT. Residues 53-73 traverse the membrane as a helical segment; the sequence is QGWLGSKWLWLLFVVVPFVIL. Over 74-171 the chain is Cytoplasmic; sequence QCQRDSEKNK…CEIWGEESSS (98 aa). Residues 81–107 are disordered; that stretch reads KNKEQSPPGLRGGQLHSPLKKKRNASP. A coiled-coil region spans residues 114–139; sequence NTLMELEVELMKFVSKVRNLKRAMAT.

Belongs to the FAM209 family. As to quaternary structure, interacts with DPY19L2. Interacts with CYLC1; the interaction may be relevant for proper acrosome attachment to the nuclear envelope.

The protein resides in the nucleus inner membrane. Functionally, may play a role in sperm acrosome biogenesis. In Homo sapiens (Human), this protein is Protein FAM209A.